The chain runs to 220 residues: Cysteine-rich venom protein (220 aa).

Positions 20–147 (DLHNSLRRSV…AYKYFYVCQY (128 aa)) constitute an SCP domain. 8 cysteine pairs are disulfide-bonded: Cys56–Cys134, Cys73–Cys148, Cys129–Cys145, Cys167–Cys174, Cys170–Cys179, Cys183–Cys215, Cys192–Cys209, and Cys200–Cys213. The region spanning 183-215 (CTREDEFINCNDLVKQGCQTDYLKSNCAASCFC) is the ShKT domain.

In terms of tissue distribution, expressed by the venom gland.

It is found in the secreted. In terms of biological role, blocks contraction of smooth muscle elicited by high potassium-induced depolarization, but does not block caffeine-stimulated contraction. May target voltage-gated calcium channels in smooth muscle. The chain is Cysteine-rich venom protein from Echis coloratus (Carpet viper).